The following is a 138-amino-acid chain: ATP synthase epsilon chain (138 aa).

Belongs to the ATPase epsilon chain family. As to quaternary structure, F-type ATPases have 2 components, CF(1) - the catalytic core - and CF(0) - the membrane proton channel. CF(1) has five subunits: alpha(3), beta(3), gamma(1), delta(1), epsilon(1). CF(0) has three main subunits: a, b and c.

The protein localises to the cellular thylakoid membrane. Its function is as follows. Produces ATP from ADP in the presence of a proton gradient across the membrane. This is ATP synthase epsilon chain (atpC) from Synechococcus sp. (strain PCC 6716).